We begin with the raw amino-acid sequence, 206 residues long: Large ribosomal subunit protein eL13 (206 aa).

Positions Glu-184 to Lys-193 are enriched in basic and acidic residues. The disordered stretch occupies residues Glu-184–Ala-206.

This sequence belongs to the eukaryotic ribosomal protein eL13 family.

The sequence is that of Large ribosomal subunit protein eL13 (RPL13) from Tetrahymena thermophila (strain SB210).